Here is a 141-residue protein sequence, read N- to C-terminus: Large ribosomal subunit protein uL16 (141 aa).

The disordered stretch occupies residues methionine 1–alanine 21.

This sequence belongs to the universal ribosomal protein uL16 family. Part of the 50S ribosomal subunit.

Binds 23S rRNA and is also seen to make contacts with the A and possibly P site tRNAs. In Roseiflexus sp. (strain RS-1), this protein is Large ribosomal subunit protein uL16.